Consider the following 131-residue polypeptide: Small ribosomal subunit protein uS8 (131 aa).

Belongs to the universal ribosomal protein uS8 family. Part of the 30S ribosomal subunit. Contacts proteins S5 and S12.

Functionally, one of the primary rRNA binding proteins, it binds directly to 16S rRNA central domain where it helps coordinate assembly of the platform of the 30S subunit. The protein is Small ribosomal subunit protein uS8 of Acidithiobacillus ferrooxidans (strain ATCC 23270 / DSM 14882 / CIP 104768 / NCIMB 8455) (Ferrobacillus ferrooxidans (strain ATCC 23270)).